Reading from the N-terminus, the 329-residue chain is DNA-directed RNA polymerase subunit alpha (329 aa).

Residues 1–235 are alpha N-terminal domain (alpha-NTD); sequence MQGSVTEFLK…EQLEAFVDLR (235 aa). Positions 249–329 are alpha C-terminal domain (alpha-CTD); sequence FDPILLRPVD…NWPPASIADE (81 aa).

Belongs to the RNA polymerase alpha chain family. As to quaternary structure, homodimer. The RNAP catalytic core consists of 2 alpha, 1 beta, 1 beta' and 1 omega subunit. When a sigma factor is associated with the core the holoenzyme is formed, which can initiate transcription.

It carries out the reaction RNA(n) + a ribonucleoside 5'-triphosphate = RNA(n+1) + diphosphate. DNA-dependent RNA polymerase catalyzes the transcription of DNA into RNA using the four ribonucleoside triphosphates as substrates. The sequence is that of DNA-directed RNA polymerase subunit alpha from Sodalis glossinidius (strain morsitans).